A 242-amino-acid polypeptide reads, in one-letter code: Large ribosomal subunit protein uL1 (242 aa).

This sequence belongs to the universal ribosomal protein uL1 family. As to quaternary structure, part of the 50S ribosomal subunit.

Its function is as follows. Binds directly to 23S rRNA. The L1 stalk is quite mobile in the ribosome, and is involved in E site tRNA release. Functionally, protein L1 is also a translational repressor protein, it controls the translation of the L11 operon by binding to its mRNA. The protein is Large ribosomal subunit protein uL1 of Dictyoglomus turgidum (strain DSM 6724 / Z-1310).